A 613-amino-acid polypeptide reads, in one-letter code: Dihydroxy-acid dehydratase (613 aa).

A Mg(2+)-binding site is contributed by Asp81. Cys122 serves as a coordination point for [2Fe-2S] cluster. 2 residues coordinate Mg(2+): Asp123 and Lys124. Lys124 is modified (N6-carboxylysine). A [2Fe-2S] cluster-binding site is contributed by Cys195. Glu491 provides a ligand contact to Mg(2+). Ser517 (proton acceptor) is an active-site residue.

It belongs to the IlvD/Edd family. As to quaternary structure, homodimer. It depends on [2Fe-2S] cluster as a cofactor. Mg(2+) serves as cofactor.

The catalysed reaction is (2R)-2,3-dihydroxy-3-methylbutanoate = 3-methyl-2-oxobutanoate + H2O. It catalyses the reaction (2R,3R)-2,3-dihydroxy-3-methylpentanoate = (S)-3-methyl-2-oxopentanoate + H2O. It participates in amino-acid biosynthesis; L-isoleucine biosynthesis; L-isoleucine from 2-oxobutanoate: step 3/4. Its pathway is amino-acid biosynthesis; L-valine biosynthesis; L-valine from pyruvate: step 3/4. In terms of biological role, functions in the biosynthesis of branched-chain amino acids. Catalyzes the dehydration of (2R,3R)-2,3-dihydroxy-3-methylpentanoate (2,3-dihydroxy-3-methylvalerate) into 2-oxo-3-methylpentanoate (2-oxo-3-methylvalerate) and of (2R)-2,3-dihydroxy-3-methylbutanoate (2,3-dihydroxyisovalerate) into 2-oxo-3-methylbutanoate (2-oxoisovalerate), the penultimate precursor to L-isoleucine and L-valine, respectively. The sequence is that of Dihydroxy-acid dehydratase from Aliivibrio fischeri (strain ATCC 700601 / ES114) (Vibrio fischeri).